The following is a 439-amino-acid chain: Ribosomal protein uS12 methylthiotransferase RimO (439 aa).

The MTTase N-terminal domain occupies 2 to 114 (SKLYLMSLGC…VDEMILKKTN (113 aa)). The [4Fe-4S] cluster site is built by Cys11, Cys45, Cys77, Cys146, Cys150, and Cys153. Residues 132-363 (TGSNSHAFIK…VNEVIEKSFE (232 aa)) enclose the Radical SAM core domain.

This sequence belongs to the methylthiotransferase family. RimO subfamily. [4Fe-4S] cluster is required as a cofactor.

It is found in the cytoplasm. It carries out the reaction L-aspartate(89)-[ribosomal protein uS12]-hydrogen + (sulfur carrier)-SH + AH2 + 2 S-adenosyl-L-methionine = 3-methylsulfanyl-L-aspartate(89)-[ribosomal protein uS12]-hydrogen + (sulfur carrier)-H + 5'-deoxyadenosine + L-methionine + A + S-adenosyl-L-homocysteine + 2 H(+). In terms of biological role, catalyzes the methylthiolation of an aspartic acid residue of ribosomal protein uS12. This chain is Ribosomal protein uS12 methylthiotransferase RimO, found in Campylobacter jejuni (strain RM1221).